Consider the following 256-residue polypeptide: Thiazole synthase (256 aa).

Residue K96 is the Schiff-base intermediate with DXP of the active site. 1-deoxy-D-xylulose 5-phosphate contacts are provided by residues G157, 184 to 185, and 206 to 207; these read AG and NT.

It belongs to the ThiG family. As to quaternary structure, homotetramer. Forms heterodimers with either ThiH or ThiS.

The protein resides in the cytoplasm. It carries out the reaction [ThiS sulfur-carrier protein]-C-terminal-Gly-aminoethanethioate + 2-iminoacetate + 1-deoxy-D-xylulose 5-phosphate = [ThiS sulfur-carrier protein]-C-terminal Gly-Gly + 2-[(2R,5Z)-2-carboxy-4-methylthiazol-5(2H)-ylidene]ethyl phosphate + 2 H2O + H(+). Its pathway is cofactor biosynthesis; thiamine diphosphate biosynthesis. Catalyzes the rearrangement of 1-deoxy-D-xylulose 5-phosphate (DXP) to produce the thiazole phosphate moiety of thiamine. Sulfur is provided by the thiocarboxylate moiety of the carrier protein ThiS. In vitro, sulfur can be provided by H(2)S. This is Thiazole synthase from Roseobacter denitrificans (strain ATCC 33942 / OCh 114) (Erythrobacter sp. (strain OCh 114)).